Reading from the N-terminus, the 429-residue chain is Trigger factor (429 aa).

Residues 162–247 (DDTVDLAFEG…INAIKKLRQP (86 aa)) enclose the PPIase FKBP-type domain.

This sequence belongs to the FKBP-type PPIase family. Tig subfamily.

It localises to the cytoplasm. It catalyses the reaction [protein]-peptidylproline (omega=180) = [protein]-peptidylproline (omega=0). Its function is as follows. Involved in protein export. Acts as a chaperone by maintaining the newly synthesized protein in an open conformation. Functions as a peptidyl-prolyl cis-trans isomerase. The protein is Trigger factor of Fusobacterium nucleatum subsp. nucleatum (strain ATCC 25586 / DSM 15643 / BCRC 10681 / CIP 101130 / JCM 8532 / KCTC 2640 / LMG 13131 / VPI 4355).